The sequence spans 693 residues: Protein VP3 (693 aa).

The interval 187–255 is N7-methyltransferase activity; it reads FMRLLRMRFA…VISELKGLGS (69 aa). A 2'-O-methyltransferase activity region spans residues 256–432; sequence YSEKKISEFG…KRQKIKVTKS (177 aa). Residues 433 to 559 are N7-methyltransferase activity; it reads LMYNAINTIY…NHIYIIPNAR (127 aa). Positions 560–693 are GTase/RTPase activity; it reads DENNFDTFGS…KMMEIWEVQV (134 aa).

It belongs to the rotavirus VP3 family. Interacts with VP1. Interacts with VP2.

The protein resides in the virion. It catalyses the reaction a 5'-end diphospho-ribonucleoside in mRNA + GTP + H(+) = a 5'-end (5'-triphosphoguanosine)-ribonucleoside in mRNA + diphosphate. The enzyme catalyses a 5'-end (5'-triphosphoguanosine)-ribonucleoside in mRNA + S-adenosyl-L-methionine = a 5'-end (N(7)-methyl 5'-triphosphoguanosine)-ribonucleoside in mRNA + S-adenosyl-L-homocysteine. Functionally, multifunctional enzyme involved in mRNA capping. Catalyzes the formation of the 5' cap structure on the viral plus-strand transcripts. Specifically binds to GTP and displays guanylyltransferase and methyltransferase activities. Has affinity for ssRNA but not for dsRNA. Capping activity is non-specific and caps RNAs that initiate with either a G or an A residue. Together with VP1 polymerase, forms a VP1-VP3 complex positioned near the channels situated at each of the five-fold vertices of the core. Following infection, the outermost layer of the virus is lost, leaving a double-layered particle (DLP) made up of the core and VP6 shell. VP1 then catalyzes the transcription of fully conservative plus-strand genomic RNAs that are capped by VP3 and extruded through the DLP's channels into the cytoplasm where they function as mRNAs for translation of viral proteins. DLPs probably have an RNA triphosphatase activity as well, whereas open cores do not. In Homo sapiens (Human), this protein is Protein VP3.